We begin with the raw amino-acid sequence, 60 residues long: Light-harvesting protein B-800/850 alpha chain (60 aa).

Residues methionine 1–threonine 14 lie on the Cytoplasmic side of the membrane. A helical membrane pass occupies residues glycine 15–leucine 35. Histidine 31 is a binding site for a bacteriochlorophyll. Residues threonine 36–glutamine 60 are Periplasmic-facing.

The protein belongs to the antenna complex alpha subunit family. As to quaternary structure, the core complex is formed by different alpha and beta chains, binding bacteriochlorophyll molecules, and arranged most probably in tetrameric structures disposed around the reaction center. The non-pigmented gamma chains may constitute additional components.

The protein localises to the cell inner membrane. In terms of biological role, antenna complexes are light-harvesting systems, which transfer the excitation energy to the reaction centers. The chain is Light-harvesting protein B-800/850 alpha chain (pucA) from Rhodobacter capsulatus (Rhodopseudomonas capsulata).